Consider the following 455-residue polypeptide: MASITGALILAAGKGTRMHSDKPKVLQSILGEPMLRFVYDALEPLFGGNLWTVIGHKADMVREAFKGEDHRFVVQEKQLGTGHALQAAWGELKAAGLDRVVVVNGDTPLLPTSTVATFLKEAMDADVAFMTLTLPDPGAYGRVVRHNRRVVAIVEAKDYDETLYGPEPDEINAGIYCLRMDAVEKLLPRLTNANKSGEYYITDLVGLAVAERMDVIGVECGQDPNLLGVNDPAELIRSEALVRARIALNWIEKRVLIHAPETVRISPRAVLEPGAEIYGPCEIYGASRIARAAVVHSHCWLRDAVVAEGATVHPFSHVEKAEIGPDCVVGPYARLRPGAVMEEGARVGNFVEMKKARLCKGAKANHLTYLGDAEVGPGANIGAGTITCNYDGVHKHKTVIGEGAFIGSNSALVAPVTIGAGSLVGAGSVITKDVPDDSLAIARGRQTTLPRRRNS.

A pyrophosphorylase region spans residues 1 to 232 (MASITGALIL…DPNLLGVNDP (232 aa)). UDP-N-acetyl-alpha-D-glucosamine is bound by residues 10–13 (LAAG), K24, Q75, and 80–81 (GT). D106 lines the Mg(2+) pocket. UDP-N-acetyl-alpha-D-glucosamine is bound by residues G141, E155, N172, and N230. N230 is a binding site for Mg(2+). The tract at residues 233 to 253 (AELIRSEALVRARIALNWIEK) is linker. The tract at residues 254–455 (RVLIHAPETV…QTTLPRRRNS (202 aa)) is N-acetyltransferase. UDP-N-acetyl-alpha-D-glucosamine contacts are provided by R336 and K354. H366 acts as the Proton acceptor in catalysis. Y369 and N380 together coordinate UDP-N-acetyl-alpha-D-glucosamine. Acetyl-CoA-binding positions include A383, 389–390 (NY), S408, A426, and R443.

The protein in the N-terminal section; belongs to the N-acetylglucosamine-1-phosphate uridyltransferase family. It in the C-terminal section; belongs to the transferase hexapeptide repeat family. In terms of assembly, homotrimer. The cofactor is Mg(2+).

Its subcellular location is the cytoplasm. It carries out the reaction alpha-D-glucosamine 1-phosphate + acetyl-CoA = N-acetyl-alpha-D-glucosamine 1-phosphate + CoA + H(+). The catalysed reaction is N-acetyl-alpha-D-glucosamine 1-phosphate + UTP + H(+) = UDP-N-acetyl-alpha-D-glucosamine + diphosphate. The protein operates within nucleotide-sugar biosynthesis; UDP-N-acetyl-alpha-D-glucosamine biosynthesis; N-acetyl-alpha-D-glucosamine 1-phosphate from alpha-D-glucosamine 6-phosphate (route II): step 2/2. It participates in nucleotide-sugar biosynthesis; UDP-N-acetyl-alpha-D-glucosamine biosynthesis; UDP-N-acetyl-alpha-D-glucosamine from N-acetyl-alpha-D-glucosamine 1-phosphate: step 1/1. Its pathway is bacterial outer membrane biogenesis; LPS lipid A biosynthesis. Its function is as follows. Catalyzes the last two sequential reactions in the de novo biosynthetic pathway for UDP-N-acetylglucosamine (UDP-GlcNAc). The C-terminal domain catalyzes the transfer of acetyl group from acetyl coenzyme A to glucosamine-1-phosphate (GlcN-1-P) to produce N-acetylglucosamine-1-phosphate (GlcNAc-1-P), which is converted into UDP-GlcNAc by the transfer of uridine 5-monophosphate (from uridine 5-triphosphate), a reaction catalyzed by the N-terminal domain. This Nitratidesulfovibrio vulgaris (strain DSM 19637 / Miyazaki F) (Desulfovibrio vulgaris) protein is Bifunctional protein GlmU.